Consider the following 130-residue polypeptide: Small ribosomal subunit protein uS9 (130 aa).

The protein belongs to the universal ribosomal protein uS9 family.

The protein is Small ribosomal subunit protein uS9 of Teredinibacter turnerae (strain ATCC 39867 / T7901).